Consider the following 191-residue polypeptide: Peptidyl-tRNA hydrolase (191 aa).

Position 14 (tyrosine 14) interacts with tRNA. Residue histidine 19 is the Proton acceptor of the active site. TRNA is bound by residues phenylalanine 64, asparagine 66, and asparagine 113.

It belongs to the PTH family. As to quaternary structure, monomer.

The protein resides in the cytoplasm. It carries out the reaction an N-acyl-L-alpha-aminoacyl-tRNA + H2O = an N-acyl-L-amino acid + a tRNA + H(+). Hydrolyzes ribosome-free peptidyl-tRNAs (with 1 or more amino acids incorporated), which drop off the ribosome during protein synthesis, or as a result of ribosome stalling. In terms of biological role, catalyzes the release of premature peptidyl moieties from peptidyl-tRNA molecules trapped in stalled 50S ribosomal subunits, and thus maintains levels of free tRNAs and 50S ribosomes. The polypeptide is Peptidyl-tRNA hydrolase (Fusobacterium nucleatum subsp. nucleatum (strain ATCC 25586 / DSM 15643 / BCRC 10681 / CIP 101130 / JCM 8532 / KCTC 2640 / LMG 13131 / VPI 4355)).